A 396-amino-acid chain; its full sequence is Phosphoglycerate kinase (396 aa).

Residues Asp21–Asn23, Arg36, His59–Arg62, Arg118, and Arg151 each bind substrate. Residues Lys201, Glu323, and Gly353–Thr356 each bind ATP.

This sequence belongs to the phosphoglycerate kinase family. As to quaternary structure, monomer.

It is found in the cytoplasm. It catalyses the reaction (2R)-3-phosphoglycerate + ATP = (2R)-3-phospho-glyceroyl phosphate + ADP. The protein operates within carbohydrate degradation; glycolysis; pyruvate from D-glyceraldehyde 3-phosphate: step 2/5. In Ruegeria sp. (strain TM1040) (Silicibacter sp.), this protein is Phosphoglycerate kinase.